The following is a 380-amino-acid chain: Cytochrome b (380 aa).

4 helical membrane-spanning segments follow: residues 34–54 (FGSL…LLAM), 78–99 (WLIR…YLHI), 114–134 (WNTG…GYVL), and 179–199 (FFAL…IHLT). Residues His-84 and His-98 each coordinate heme b. Heme b contacts are provided by His-183 and His-197. His-202 serves as a coordination point for a ubiquinone. The next 4 helical transmembrane spans lie at 227 to 247 (LKDI…ALFS), 289 to 309 (LGGV…PFLH), 321 to 341 (LSQL…WVGS), and 348 to 368 (FIII…ILFP).

Belongs to the cytochrome b family. The cytochrome bc1 complex contains 11 subunits: 3 respiratory subunits (MT-CYB, CYC1 and UQCRFS1), 2 core proteins (UQCRC1 and UQCRC2) and 6 low-molecular weight proteins (UQCRH/QCR6, UQCRB/QCR7, UQCRQ/QCR8, UQCR10/QCR9, UQCR11/QCR10 and a cleavage product of UQCRFS1). This cytochrome bc1 complex then forms a dimer. Heme b is required as a cofactor.

It is found in the mitochondrion inner membrane. In terms of biological role, component of the ubiquinol-cytochrome c reductase complex (complex III or cytochrome b-c1 complex) that is part of the mitochondrial respiratory chain. The b-c1 complex mediates electron transfer from ubiquinol to cytochrome c. Contributes to the generation of a proton gradient across the mitochondrial membrane that is then used for ATP synthesis. The sequence is that of Cytochrome b (MT-CYB) from Thalassoica antarctica (Antarctic petrel).